We begin with the raw amino-acid sequence, 374 residues long: Large ribosomal subunit protein uL4 (374 aa).

Residues 336 to 355 are disordered; that stretch reads EKAMAKGMQNKKNREARHAA.

It belongs to the universal ribosomal protein uL4 family.

The protein is Large ribosomal subunit protein uL4 (RPL4) of Trypanosoma brucei brucei.